The following is a 381-amino-acid chain: Tafazzin (381 aa).

Over 1–25 the chain is Mitochondrial intermembrane; it reads MSFRDVLERGDEFLEAYPRRSPLWR. An intramembrane segment occupies 26 to 47; that stretch reads FLSYSTSLLTFGVSKLLLFTCY. The Mitochondrial intermembrane segment spans residues 48-381; that stretch reads NVKLNGFEKL…PEGKPKGKDD (334 aa). An HXXXXD motif motif is present at residues 77 to 82; it reads HMSMVD. The required for membrane insertion stretch occupies residues 215 to 232; it reads LEATKPPIVVPIFATGFE.

It belongs to the taffazin family.

Its subcellular location is the mitochondrion outer membrane. It localises to the mitochondrion inner membrane. It carries out the reaction 1'-[1,2-diacyl-sn-glycero-3-phospho],3'-[1-acyl-sn-glycero-3-phospho]-glycerol + a 1,2-diacyl-sn-glycero-3-phosphocholine = a cardiolipin + a 1-acyl-sn-glycero-3-phosphocholine. The catalysed reaction is 1,2-di-(9Z,12Z-octadecadienoyl)-sn-glycero-3-phosphocholine + 1'-[1,2-di-(9Z,12Z-octadecadienoyl)-sn-glycero-3-phospho]-3'-[1-(9Z,12Z-octadecadienoyl)-sn-glycero-3-phospho]-glycerol = 1-(9Z,12Z)-octadecadienoyl-sn-glycero-3-phosphocholine + 1',3'-bis-[1,2-di-(9Z,12Z-octadecadienoyl)-sn-glycero-3-phospho]-glycerol. It catalyses the reaction 1'-[1,2-di-(9Z-octadecenoyl)-sn-glycero-3-phospho]-3'-[1-(9Z-octadecenoyl)-2-hexadecanoyl-sn-glycero-3-phospho]-glycerol + 1-hexadecanoyl-sn-glycero-3-phosphocholine = 1'-[1,2-di-(9Z-octadecenoyl)-sn-glycero-3-phospho]-3'-[1-(9Z-octadecenoyl)-sn-glycero-3-phospho]-glycerol + 1,2-dihexadecanoyl-sn-glycero-3-phosphocholine. The enzyme catalyses 1'-[1,2-di-(9Z-octadecenoyl)-sn-glycero-3-phospho]-3'-[1-(9Z-octadecenoyl)-2-(9Z-hexadecenoyl)-sn-glycero-3-phospho]-glycerol + 1-(9Z-hexadecenoyl)-sn-glycero-3-phosphocholine = 1,2-di-(9Z-hexadecenoyl)-sn-glycero-3-phosphocholine + 1'-[1,2-di-(9Z-octadecenoyl)-sn-glycero-3-phospho]-3'-[1-(9Z-octadecenoyl)-sn-glycero-3-phospho]-glycerol. It carries out the reaction 1',3'-bis[1,2-di-(9Z-octadecenoyl)-sn-glycero-3-phospho]-glycerol + 1-(9Z-octadecenoyl)-sn-glycero-3-phosphocholine = 1'-[1,2-di-(9Z-octadecenoyl)-sn-glycero-3-phospho]-3'-[1-(9Z-octadecenoyl)-sn-glycero-3-phospho]-glycerol + 1,2-di-(9Z-octadecenoyl)-sn-glycero-3-phosphocholine. The catalysed reaction is 1'-[1,2-di-(9Z-octadecenoyl)-sn-glycero-3-phospho]-3'-[1-(9Z-octadecenoyl)-2-(9Z,12Z-octadecadienoyl)-sn-glycero-3-phospho]-glycerol + 1-(9Z,12Z)-octadecadienoyl-sn-glycero-3-phosphocholine = 1,2-di-(9Z,12Z-octadecadienoyl)-sn-glycero-3-phosphocholine + 1'-[1,2-di-(9Z-octadecenoyl)-sn-glycero-3-phospho]-3'-[1-(9Z-octadecenoyl)-sn-glycero-3-phospho]-glycerol. It catalyses the reaction 1'-[1,2-di-(9Z-octadecenoyl)-sn-glycero-3-phospho]-3'-[1-(9Z-octadecenoyl)-2-(9Z-hexadecenoyl)-sn-glycero-3-phospho]-glycerol + 1-hexadecanoyl-sn-glycero-3-phosphocholine = 1-hexadecanoyl-2-(9Z-hexadecenoyl)-sn-glycero-3-phosphocholine + 1'-[1,2-di-(9Z-octadecenoyl)-sn-glycero-3-phospho]-3'-[1-(9Z-octadecenoyl)-sn-glycero-3-phospho]-glycerol. The enzyme catalyses 1'-[1,2-di-(9Z-octadecenoyl)-sn-glycero-3-phospho]-3'-[1-(9Z-octadecenoyl)-2-hexadecanoyl-sn-glycero-3-phospho]-glycerol + 1-(9Z-hexadecenoyl)-sn-glycero-3-phosphocholine = 1-(9Z-hexadecenoyl)-2-hexadecanoyl-sn-glycero-3-phosphocholine + 1'-[1,2-di-(9Z-octadecenoyl)-sn-glycero-3-phospho]-3'-[1-(9Z-octadecenoyl)-sn-glycero-3-phospho]-glycerol. It carries out the reaction 2 1'-[1,2-diacyl-sn-glycero-3-phospho],3'-[1-acyl-sn-glycero-3-phospho]-glycerol = 1',3'-bis-[1-acyl-sn-glycero-3-phospho]-glycerol + a cardiolipin. The catalysed reaction is 2 1'-[1,2-di-(9Z-octadecenoyl)-sn-glycero-3-phospho]-3'-[1-(9Z-octadecenoyl)-sn-glycero-3-phospho]-glycerol = 1',3'-bis-[1-(9Z-octadecenoyl)-sn-glycero-3-phospho]-glycerol + 1',3'-bis[1,2-di-(9Z-octadecenoyl)-sn-glycero-3-phospho]-glycerol. It catalyses the reaction 1,2-di-(9Z-hexadecenoyl)-sn-glycero-3-phosphocholine + 1-hexadecanoyl-sn-glycero-3-phosphocholine = 1-hexadecanoyl-2-(9Z-hexadecenoyl)-sn-glycero-3-phosphocholine + 1-(9Z-hexadecenoyl)-sn-glycero-3-phosphocholine. The enzyme catalyses 1'-[1,2-di-(9Z,12Z-octadecadienoyl)-sn-glycero-3-phospho]-3'-[1-(9Z,12Z-octadecadienoyl)-sn-glycero-3-phospho]-glycerol + 1,2-di-(9Z-octadecenoyl)-sn-glycero-3-phosphocholine = 1'-[1,2-di-(9Z,12Z-octadecadienoyl)-sn-glycero-3-phospho]-3'-[1-(9Z,12Z-octadecadienoyl)-2-(9Z-octadecenoyl)-sn-glycero-3-phospho]-glycerol + 1-(9Z-octadecenoyl)-sn-glycero-3-phosphocholine. It functions in the pathway phospholipid metabolism. Functionally, acyltransferase required to remodel newly synthesized phospholipid cardiolipin (1',3'-bis-[1,2-diacyl-sn-glycero-3-phospho]-glycerol or CL), a key component of the mitochondrial inner membrane, with tissue specific acyl chains necessary for adequate mitochondrial function. Its role in cellular physiology is to improve mitochondrial performance. CL is critical for the coassembly of lipids and proteins in mitochondrial membranes, for instance, remodeling of the acyl groups of CL in the mitochondrial inner membrane affects the assembly and stability of respiratory chain complex IV and its supercomplex forms. Catalyzes the transacylation between phospholipids and lysophospholipids, with the highest rate being between phosphatidylcholine (1,2-diacyl-sn-glycero-3-phosphocholine or PC) and CL. Catalyzes both 1-acyl-sn-glycero-3-phosphocholine (lysophosphatidylcholine or LPC) reacylation and PC-CL transacylation, that means, it exchanges acyl groups between CL and PC by a combination of forward and reverse transacylations. Also catalyzes transacylations between other phospholipids such as phosphatidylethanolamine (1,2-diacyl-sn-glycero-3-phosphoethanolamine or PE) and CL, between PC and PE, and between PC and phosphatidate (1,2-diacyl-sn-glycero-3-phosphate or PA), although at lower rate. Not regiospecific, it transfers acyl groups into any of the sn-1 and sn-2 positions of the monolysocardiolipin (MLCL), which is an important prerequisite for uniformity and symmetry in CL acyl distribution. Cannot transacylate dilysocardiolipin (DLCL), thus, the role of MLCL is limited to that of an acyl acceptor. CoA-independent, it can reshuffle molecular species within a single phospholipid class. Redistributes fatty acids between MLCL, CL, and other lipids, which prolongs the half-life of CL. Its action is completely reversible, which allows for cyclic changes, such as fission and fusion or bending and flattening of the membrane. Hence, by contributing to the flexibility of the lipid composition, it plays an important role in the dynamics of mitochondria membranes. Essential for the final stage of spermatogenesis, spermatid individualization. Required for the initiation of mitophagy. The chain is Tafazzin (TAZ1) from Saccharomyces cerevisiae (strain ATCC 204508 / S288c) (Baker's yeast).